Here is a 455-residue protein sequence, read N- to C-terminus: Tubulin delta chain (455 aa).

Residue 143–149 (AGGTGSG) participates in GTP binding.

The protein belongs to the tubulin family. Found in a complex with TEDC1, TEDC2, TUBE1 and TUBD1. In terms of tissue distribution, highly expressed in testis.

Its subcellular location is the cell projection. It localises to the cilium. The protein localises to the cytoplasm. It is found in the cytoskeleton. The protein resides in the microtubule organizing center. Its subcellular location is the centrosome. It localises to the centriole. The protein localises to the nucleus. Its function is as follows. Acts as a positive regulator of hedgehog signaling and regulates ciliary function. The protein is Tubulin delta chain (Tubd1) of Mus musculus (Mouse).